The following is a 624-amino-acid chain: Chaperone protein DnaK (624 aa).

Position 174 is a phosphothreonine; by autocatalysis (Thr-174). 2 disordered regions span residues 544–563 and 576–624; these read KKAQ…DDLS and NAQK…DDKK. Positions 581–600 are enriched in low complexity; sequence QQAQGGPASGAATDAGAAQG. The segment covering 601-624 has biased composition (basic and acidic residues); that stretch reads SDDKKSDDDTINGDYKDVSDDDKK.

The protein belongs to the heat shock protein 70 family.

Functionally, acts as a chaperone. This is Chaperone protein DnaK from Lacticaseibacillus casei (strain BL23) (Lactobacillus casei).